The sequence spans 248 residues: MKKIVLLRHGESAWNKENRFTGWTDVDLTEKGIAEACKAGELLKENGFNFDKAYTSYLKRAVKTLNCVLDRMDQDWIPVEKSWRLNEKHYGDLQGLNKSETAAKYGDEQVLIWRRSYDIAPNALSEDDPRNPRFENRYQEVPDAELPRTESLKDTIERIMPYWKCIIFPNLKTADEILVVAHGNSLRGIIKHLKHISDEEIVKLNLPTAVPYVFEFSDELNLEKDYFLGDPEEIRKLMEAVANQGKKK.

Residues 8-15 (RHGESAWN), 21-22 (TG), arginine 60, 87-90 (EKHY), lysine 98, 114-115 (RR), and 183-184 (GN) each bind substrate. Histidine 9 (tele-phosphohistidine intermediate) is an active-site residue. Residue glutamate 87 is the Proton donor/acceptor of the active site.

It belongs to the phosphoglycerate mutase family. BPG-dependent PGAM subfamily.

It carries out the reaction (2R)-2-phosphoglycerate = (2R)-3-phosphoglycerate. The protein operates within carbohydrate degradation; glycolysis; pyruvate from D-glyceraldehyde 3-phosphate: step 3/5. In terms of biological role, catalyzes the interconversion of 2-phosphoglycerate and 3-phosphoglycerate. The protein is 2,3-bisphosphoglycerate-dependent phosphoglycerate mutase of Bacteroides fragilis (strain ATCC 25285 / DSM 2151 / CCUG 4856 / JCM 11019 / LMG 10263 / NCTC 9343 / Onslow / VPI 2553 / EN-2).